We begin with the raw amino-acid sequence, 293 residues long: Protease HtpX (293 aa).

2 helical membrane-spanning segments follow: residues 4–24 and 34–54; these read IALF…VLSL and GLLI…LLMS. Histidine 139 contributes to the Zn(2+) binding site. Glutamate 140 is an active-site residue. Histidine 143 lines the Zn(2+) pocket. 2 helical membrane-spanning segments follow: residues 158–178 and 193–213; these read VVNT…AGFM and LIYF…ASII. Residue glutamate 222 coordinates Zn(2+).

The protein belongs to the peptidase M48B family. It depends on Zn(2+) as a cofactor.

It localises to the cell inner membrane. This is Protease HtpX from Enterobacter sp. (strain 638).